The chain runs to 217 residues: Probable septum site-determining protein MinC (217 aa).

It belongs to the MinC family. As to quaternary structure, interacts with MinD and FtsZ.

In terms of biological role, cell division inhibitor that blocks the formation of polar Z ring septums. Rapidly oscillates between the poles of the cell to destabilize FtsZ filaments that have formed before they mature into polar Z rings. Prevents FtsZ polymerization. The sequence is that of Probable septum site-determining protein MinC from Pelotomaculum thermopropionicum (strain DSM 13744 / JCM 10971 / SI).